A 194-amino-acid chain; its full sequence is dCTP deaminase (194 aa).

DCTP is bound by residues 110 to 115, D128, 136 to 138, Y171, K178, and Q182; these read RSSLAR and VLE. The active-site Proton donor/acceptor is the E138. The segment at 171–194 is disordered; the sequence is YNKRKNAKYKDQQEAVASRISQDS.

The protein belongs to the dCTP deaminase family. In terms of assembly, homotrimer.

The catalysed reaction is dCTP + H2O + H(+) = dUTP + NH4(+). Its pathway is pyrimidine metabolism; dUMP biosynthesis; dUMP from dCTP (dUTP route): step 1/2. Its function is as follows. Catalyzes the deamination of dCTP to dUTP. This Shewanella amazonensis (strain ATCC BAA-1098 / SB2B) protein is dCTP deaminase.